A 487-amino-acid chain; its full sequence is 4-alpha-glucanotransferase (487 aa).

It belongs to the disproportionating enzyme family.

Its subcellular location is the cytoplasm. It carries out the reaction Transfers a segment of a (1-&gt;4)-alpha-D-glucan to a new position in an acceptor, which may be glucose or a (1-&gt;4)-alpha-D-glucan.. Functionally, catalyzes a disproportionation reaction in which single or multiple glucose units from oligosaccharides are transferred to the 4-hydroxyl group of acceptor sugars. Glucose, maltose and maltotriose can act as acceptor, whereas of the three only maltotriose can act as donor. This is 4-alpha-glucanotransferase (malQ) from Clostridium butyricum.